A 225-amino-acid polypeptide reads, in one-letter code: Vacuolar protein sorting-associated protein 2 homolog 1 (225 aa).

A coiled-coil region spans residues 13–54; it reads AELLRENKRMLDKSIREIERERQGLQTQEKKLINEIKKTAKQ.

This sequence belongs to the SNF7 family. In terms of assembly, component of the endosomal sorting required for transport complex III (ESCRT-III), composed at least of VPS2, VPS20, VPS24 and VPS32. Interacts with SKD1.

The protein localises to the endosome. Component of the ESCRT-III complex, which is required for multivesicular bodies (MVBs) formation and sorting of endosomal cargo proteins into MVBs. The ESCRT-III complex is probably involved in the concentration of MVB cargo. This is Vacuolar protein sorting-associated protein 2 homolog 1 (VPS2.1) from Arabidopsis thaliana (Mouse-ear cress).